Consider the following 133-residue polypeptide: Glycine cleavage system H protein (133 aa).

In terms of domain architecture, Lipoyl-binding spans threonine 30–lysine 112. Lysine 71 is subject to N6-lipoyllysine.

This sequence belongs to the GcvH family. In terms of assembly, the glycine cleavage system is composed of four proteins: P, T, L and H. Requires (R)-lipoate as cofactor.

Its function is as follows. The glycine cleavage system catalyzes the degradation of glycine. The H protein shuttles the methylamine group of glycine from the P protein to the T protein. This chain is Glycine cleavage system H protein, found in Neisseria gonorrhoeae (strain ATCC 700825 / FA 1090).